The following is a 740-amino-acid chain: Zinc finger CCCH domain-containing protein 14 (740 aa).

Disordered stretches follow at residues 82 to 240, 254 to 314, 390 to 426, and 444 to 469; these read SNKQ…NIKG, VSAG…DDAV, ITPS…DDEE, and SFRD…HHST. 2 stretches are compositionally biased toward basic and acidic residues: residues 87–158 and 176–185; these read ETSK…EIQR and EHVRARGEKH. Residues 186 to 200 are compositionally biased toward basic residues; that stretch reads DRHHHKDHRRGRSHE. A compositionally biased stretch (polar residues) spans 204–214; the sequence is ITSTIVRQASA. The segment covering 393 to 409 has biased composition (polar residues); that stretch reads SRDSTPTDDSPTMQKWN. Positions 414–426 are enriched in acidic residues; that stretch reads IGDDSEESEDDEE. C3H1-type zinc fingers lie at residues 499-522 and 523-543; these read HVKE…MHPT and TNCK…IHPP. The interval 623–661 is disordered; that stretch reads IKKKPAPGAESEKKEEKSDENESKAEEPKAEVAPVQPKP. Over residues 632–652 the composition is skewed to basic and acidic residues; that stretch reads ESEKKEEKSDENESKAEEPKA. 3 consecutive C3H1-type zinc fingers follow at residues 668-691, 674-691, and 693-709; these read LHSM…KHPK, CRYA…KHPK, and CRFG…FYHK.

It belongs to the ZC3H14 family.

Its subcellular location is the nucleus. The protein localises to the cytoplasm. In terms of biological role, RNA-binding protein involved in the biogenesis of circular RNAs (circRNAs), which are produced by back-splicing circularization of pre-mRNAs. This is Zinc finger CCCH domain-containing protein 14 (sut-2) from Caenorhabditis elegans.